Consider the following 263-residue polypeptide: 4-hydroxy-2-oxo-heptane-1,7-dioate aldolase (263 aa).

Residue His45 is the Proton acceptor of the active site. Residue Gln147 participates in substrate binding. Residue Glu149 coordinates a divalent metal cation. Substrate is bound by residues Ala174 and Asp175. Asp175 is a binding site for a divalent metal cation.

Belongs to the HpcH/HpaI aldolase family. In terms of assembly, homohexamer; trimer of dimers. A divalent metal cation is required as a cofactor.

It carries out the reaction 4-hydroxy-2-oxoheptanedioate = succinate semialdehyde + pyruvate. Its pathway is aromatic compound metabolism; 4-hydroxyphenylacetate degradation; pyruvate and succinate semialdehyde from 4-hydroxyphenylacetate: step 7/7. In terms of biological role, catalyzes the reversible retro-aldol cleavage of 4-hydroxy-2-ketoheptane-1,7-dioate (HKHD) to pyruvate and succinic semialdehyde. The sequence is that of 4-hydroxy-2-oxo-heptane-1,7-dioate aldolase from Salmonella typhimurium (strain LT2 / SGSC1412 / ATCC 700720).